Here is a 1060-residue protein sequence, read N- to C-terminus: DNA-directed RNA polymerase subunit beta (1060 aa).

Belongs to the RNA polymerase beta chain family. As to quaternary structure, in plastids the minimal PEP RNA polymerase catalytic core is composed of four subunits: alpha, beta, beta', and beta''. When a (nuclear-encoded) sigma factor is associated with the core the holoenzyme is formed, which can initiate transcription.

It localises to the plastid. The protein localises to the chloroplast. It carries out the reaction RNA(n) + a ribonucleoside 5'-triphosphate = RNA(n+1) + diphosphate. Functionally, DNA-dependent RNA polymerase catalyzes the transcription of DNA into RNA using the four ribonucleoside triphosphates as substrates. This chain is DNA-directed RNA polymerase subunit beta, found in Calycanthus floridus var. glaucus (Eastern sweetshrub).